Here is a 550-residue protein sequence, read N- to C-terminus: MTLPIQVLPQDVIDLIAAGEVIDSLGAVVRELVENAIDAGADRITIDISPQNWRIQVSDNGRGMSREDLQLCSYAHSTSKIRQRDDLWQITSLGFRGEALHSIAQVAHLRVASRHDDDLGCYCLYNHQGEPGNLETIPIAIGTIVTVENLFGNFPVRRQALPSINKQLKDIQTLIHNFALCHPQITWQVFQDHQDWLRISPGKDASQILPQLVKSLHFNDLASLKLDLTTPDAESAQIELVIGLPDRISRHQPDWVRIAVNGRMVRSSELEQAIFEAFARTVPKDRYPVCFLHLHLNPRSIDWNRHPAKAEIYLHNLIFWQEQIISAIDKALGLNPEHIPEKAQNQRVSQILKAAEEKSTYTIGEKSPKNRLELKAVAQIHQTYIVAEHPHGLWLVEQHIAHERVLYERLEDNWEIVPLDTPIILNQLTTRQIEQLQRLGLEIASFGDRSWAIRSIPVLLKEREDRADALLELSLGGDLQTAQVATACRSAIRNGTALSLKEMQNLLDDWQNTRNPRTCPHGRPIYLSLEETSLARFFRRHWVIGKSHGI.

This sequence belongs to the DNA mismatch repair MutL/HexB family.

Its function is as follows. This protein is involved in the repair of mismatches in DNA. It is required for dam-dependent methyl-directed DNA mismatch repair. May act as a 'molecular matchmaker', a protein that promotes the formation of a stable complex between two or more DNA-binding proteins in an ATP-dependent manner without itself being part of a final effector complex. This Microcystis aeruginosa (strain NIES-843 / IAM M-2473) protein is DNA mismatch repair protein MutL.